The primary structure comprises 1029 residues: Cilia- and flagella-associated protein 91 (1029 aa).

Disordered regions lie at residues 72 to 97 and 117 to 170; these read NYRPAANDPNDTRQRSDALAVSGPNR and PPSQ…PWEP. Residues 272-299 are a coiled coil; that stretch reads LELLDNALQVREEELDDENRLRVEARKE. The span at 837–854 shows a compositional bias: low complexity; the sequence is ENQDQQEPQPQPQPSSSS. Disordered stretches follow at residues 837–861 and 876–1029; these read ENQDQQEPQPQPQPSSSSGALDLAD and GEPS…EAAE. Residues 890 to 910 show a composition bias toward acidic residues; it reads QQLEADAEAEAEAEAEAEAGA. Over residues 911–921 the composition is skewed to low complexity; that stretch reads EAEASAQAGAE. A compositionally biased stretch (acidic residues) spans 922–932; that stretch reads AEAEAGVEAEA. Residues 933 to 944 show a composition bias toward low complexity; that stretch reads EASAGAEASVGA. Residues 964 to 982 are compositionally biased toward acidic residues; the sequence is PEAEAEAEAGAEAEAENGA. The span at 984–999 shows a compositional bias: basic and acidic residues; the sequence is AEARLGGEEEGFREGE. Over residues 1000–1015 the composition is skewed to gly residues; sequence GQGGAAAGEAGPGGEL. Residues 1016–1029 are compositionally biased toward acidic residues; it reads AEGEGEAGEGEAAE.

Belongs to the CFAP91 family. Identified in a spoke-associated complex containing CFAP61, CFAP91 and CFAP251; the complex is associated with the radial spokes of the axoneme. The complex associates with Calmodulin; the association is calcium sensitive. Interacts with RSP3.

Its subcellular location is the cytoplasm. It localises to the cytoskeleton. It is found in the flagellum axoneme. Its function is as follows. As component of a spoke-associated complex, regulates flagellar dynein activity by mediating regulatory signals between the radial spokes and dynein arms. The protein is Cilia- and flagella-associated protein 91 of Chlamydomonas reinhardtii (Chlamydomonas smithii).